We begin with the raw amino-acid sequence, 423 residues long: MASFPDCVNENEIGKAKFIGELIPPVAPFDQKSGRETWTVAFAPDGSYFAWSQGHRIVRLVPWKKCLASFSVRKEDRSSGAGPRRLSRQNSEGSLLPGEPREHTIDCGDIVWGLAFGSSVPEKQSRCVNIEWHRFKFGQDQLLLATGLNNGRIKIWDVYTGKLLLNLMDHTDIVRDLTFAPDGSLVLVSASRDKTLRVWDLKDDGNMVKVLRGHQNWVYCSAFSPDSSVLCSVGAGKAVFLWDMDKYTLIRKLEGHHNDVVCCEFSPDGALLATASYDTRVIVWDPHTATVLLELGHLFPPPSPIFAGGANDRWVRSVAFCHDGRHIASVTDDRLVRFWSIDEKSPQAIGPLTNGLCCAFSTDGSVLSAGSRDGSVHFWASPRSIASLQHLCRMTLRRVMPTQQVYTLPIPFSMQDYLAYKTL.

A disordered region spans residues 76–100 (DRSSGAGPRRLSRQNSEGSLLPGEP). WD repeat units lie at residues 125-166 (SRCV…LLLN), 169-209 (DHTD…NMVK), 213-252 (GHQNWVYCSAFSPDSSVLCSVGAGKAVFLWDMDKYTLIRK), 255-294 (GHHNDVVCCEFSPDGALLATASYDTRVIVWDPHTATVLLE), and 310-347 (ANDRWVRSVAFCHDGRHIASVTDDRLVRFWSIDEKSPQ). The region spanning 373–423 (DGSVHFWASPRSIASLQHLCRMTLRRVMPTQQVYTLPIPFSMQDYLAYKTL) is the SOCS box domain.

As to quaternary structure, component of a probable ECS E3 ubiquitin-protein ligase complex that contains the Elongin BC complex.

Its pathway is protein modification; protein ubiquitination. In terms of biological role, probable substrate-recognition component of a SCF-like ECS (Elongin-Cullin-SOCS-box protein) E3 ubiquitin-protein ligase complex which mediates the ubiquitination and subsequent proteasomal degradation of target proteins. The protein is WD repeat and SOCS box-containing protein 1 (wsb1) of Danio rerio (Zebrafish).